Reading from the N-terminus, the 386-residue chain is MIDSATVAAILASVLDGKPLEPEAATVLLKARDRSLRQQIQAAANQLRSRQVGDRVSYVINRNLNFTNICEQHCNFCAFRRDADQDGAFWLDASILLEKGAAAVAAGATEFCLQGGLNPAAKRNGRSLDFYVELTASLKQAFPQIHLHAFSPQEIQFIAREDGLSFREVLMALRSAGVGSLPGTAAEVLDDSVRRILCPEKLDSATWKTIIQTAHQVGLPTTSTLLSGHLETPSQQAQHLEQLRQLQQAAIAGETPARITEFILLPFVGELAPAPLRKRVKRDQPDLSDALLVMAVARLYLGDWIANHQPSWVKLGLAGATQALDWGCNDLGGTLMEEHITSMAGAQGGTAQTVEQLEAAIAAAGRQPYQRDTLYRPVAVEAVHAG.

The 248-residue stretch at 56–303 folds into the Radical SAM core domain; sequence VSYVINRNLN…MAVARLYLGD (248 aa). Residues cysteine 70, cysteine 74, and cysteine 77 each contribute to the [4Fe-4S] cluster site.

It belongs to the radical SAM superfamily. CofH family. Consists of two subunits, CofG and CofH. Requires [4Fe-4S] cluster as cofactor.

The catalysed reaction is 5-amino-6-(D-ribitylamino)uracil + L-tyrosine + S-adenosyl-L-methionine = 5-amino-5-(4-hydroxybenzyl)-6-(D-ribitylimino)-5,6-dihydrouracil + 2-iminoacetate + 5'-deoxyadenosine + L-methionine + H(+). Its pathway is cofactor biosynthesis; coenzyme F0 biosynthesis. Catalyzes the radical-mediated synthesis of 5-amino-5-(4-hydroxybenzyl)-6-(D-ribitylimino)-5,6-dihydrouracil from 5-amino-6-(D-ribitylamino)uracil and L-tyrosine. The chain is 5-amino-6-(D-ribitylamino)uracil--L-tyrosine 4-hydroxyphenyl transferase from Synechococcus elongatus (strain ATCC 33912 / PCC 7942 / FACHB-805) (Anacystis nidulans R2).